The following is a 275-amino-acid chain: Dermonecrotic toxin SpeSicTox-betaIIA3i (275 aa).

Residue H5 is part of the active site. Positions 25 and 27 each coordinate Mg(2+). Residue H41 is the Nucleophile of the active site. Intrachain disulfides connect C45–C51 and C47–C190. D85 contacts Mg(2+).

This sequence belongs to the arthropod phospholipase D family. Class II subfamily. The cofactor is Mg(2+). Expressed by the venom gland.

It is found in the secreted. The catalysed reaction is an N-(acyl)-sphingosylphosphocholine = an N-(acyl)-sphingosyl-1,3-cyclic phosphate + choline. The enzyme catalyses an N-(acyl)-sphingosylphosphoethanolamine = an N-(acyl)-sphingosyl-1,3-cyclic phosphate + ethanolamine. It carries out the reaction a 1-acyl-sn-glycero-3-phosphocholine = a 1-acyl-sn-glycero-2,3-cyclic phosphate + choline. It catalyses the reaction a 1-acyl-sn-glycero-3-phosphoethanolamine = a 1-acyl-sn-glycero-2,3-cyclic phosphate + ethanolamine. In terms of biological role, dermonecrotic toxins cleave the phosphodiester linkage between the phosphate and headgroup of certain phospholipids (sphingolipid and lysolipid substrates), forming an alcohol (often choline) and a cyclic phosphate. This toxin acts on sphingomyelin (SM). It may also act on ceramide phosphoethanolamine (CPE), lysophosphatidylcholine (LPC) and lysophosphatidylethanolamine (LPE), but not on lysophosphatidylserine (LPS), and lysophosphatidylglycerol (LPG). It acts by transphosphatidylation, releasing exclusively cyclic phosphate products as second products. Induces dermonecrosis, hemolysis, increased vascular permeability, edema, inflammatory response, and platelet aggregation. This Sicarius peruensis (Six-eyed sand spider) protein is Dermonecrotic toxin SpeSicTox-betaIIA3i.